A 377-amino-acid chain; its full sequence is Actin-related protein 2/3 complex subunit 1 (377 aa).

WD repeat units follow at residues 9 to 48 (ILPK…WKHA), 53 to 92 (DHDK…TWKQ), 98 to 139 (RLNR…WVSK), 144 to 183 (PLRS…VDAK), and 203 to 242 (PSGG…QPPR). Residues 293-313 (GTSKTSFTHTGNTGEGREEEG) form a disordered region. The WD 6 repeat unit spans residues 342-376 (VHQNMIATLRPYAGTPGNITAFTSSGTDGRVVLWT).

This sequence belongs to the WD repeat ARPC1 family. In terms of assembly, component of the Arp2/3 complex composed of arp2, act2, arc1/p41-ARC, arc2/p34-ARC, arc3/p21-ARC, arc4/p20-ARC and arc5/p16-ARC.

It is found in the cytoplasm. The protein localises to the cytoskeleton. Its subcellular location is the actin patch. Functionally, functions as a component of the Arp2/3 complex which is involved in regulation of actin polymerization and together with an activating nucleation-promoting factor (NPF) mediates the formation of branched actin networks. In Schizosaccharomyces pombe (strain 972 / ATCC 24843) (Fission yeast), this protein is Actin-related protein 2/3 complex subunit 1 (arc1).